A 402-amino-acid polypeptide reads, in one-letter code: Phosphoglycerate kinase (402 aa).

Residues 24-26 (DFN), Arg40, 63-66 (HFGR), Arg122, and Arg155 contribute to the substrate site. ATP is bound by residues Lys206, Gly297, Glu328, and 357–360 (GGDS).

Belongs to the phosphoglycerate kinase family. Monomer.

The protein localises to the cytoplasm. The enzyme catalyses (2R)-3-phosphoglycerate + ATP = (2R)-3-phospho-glyceroyl phosphate + ADP. It participates in carbohydrate degradation; glycolysis; pyruvate from D-glyceraldehyde 3-phosphate: step 2/5. This chain is Phosphoglycerate kinase, found in Synechococcus sp. (strain CC9311).